Reading from the N-terminus, the 346-residue chain is Sensor histidine kinase GraS (346 aa).

Helical transmembrane passes span 15 to 35 and 43 to 63; these read INWI…AYID and VFYI…FTFV. Residues 126 to 332 form the Histidine kinase domain; the sequence is EFVHDIKTPV…TFYFIFPQQN (207 aa). Phosphohistidine; by autocatalysis is present on His129.

In terms of processing, autophosphorylated.

The protein localises to the cell membrane. The enzyme catalyses ATP + protein L-histidine = ADP + protein N-phospho-L-histidine.. In terms of biological role, member of the two-component regulatory system GraR/GraS involved in resistance against cationic antimicrobial peptides (CAMPs). GraS probably functions as a sensor protein kinase which is autophosphorylated at a histidine residue and transfers its phosphate group to GraR. In Staphylococcus epidermidis (strain ATCC 35984 / DSM 28319 / BCRC 17069 / CCUG 31568 / BM 3577 / RP62A), this protein is Sensor histidine kinase GraS (graS).